A 382-amino-acid chain; its full sequence is Gibberellin 2-beta-dioxygenase 1 (382 aa).

The region spanning 189–321 is the Fe2OG dioxygenase domain; that stretch reads DSDCLLRINH…RLSTIYFASP (133 aa). Y199 is a 2-oxoglutarate binding site. Fe cation is bound by residues H241, D243, and H302. 2 residues coordinate 2-oxoglutarate: R312 and S314.

It belongs to the iron/ascorbate-dependent oxidoreductase family. GA2OX subfamily. L-ascorbate is required as a cofactor. It depends on Fe(2+) as a cofactor. As to expression, expressed in roots, shoot apex, and in the basal region of leaf primordia and young leaves.

It carries out the reaction gibberellin A1 + 2-oxoglutarate + O2 = gibberellin A8 + succinate + CO2. Its function is as follows. Catalyzes the 2-beta-hydroxylation of several biologically active gibberellins, leading to the homeostatic regulation of their endogenous level. Catabolism of gibberellins (GAs) plays a central role in plant development. Controls the level of bioactive GAs in the shoot apical meristem, which regulates the vegetative to reproductive phase transition. In vitro, converts GA1, GA4, GA9, GA20, and GA44 to the corresponding 2-beta-hydroxylated products GA8, GA34, GA51, GA29, and GA98, respectively. The sequence is that of Gibberellin 2-beta-dioxygenase 1 from Oryza sativa subsp. japonica (Rice).